The primary structure comprises 179 residues: Transcription factor E (179 aa).

One can recognise an HTH TFE/IIEalpha-type domain in the interval 1-102 (MAKKKVKYTF…YWRFDSRKAA (102 aa)).

It belongs to the TFE family. Monomer. Interaction with RNA polymerase subunits RpoF and RpoE is necessary for Tfe stimulatory transcription activity. Able to interact with Tbp and RNA polymerase in the absence of DNA promoter. Interacts both with the preinitiation and elongation complexes.

Functionally, transcription factor that plays a role in the activation of archaeal genes transcribed by RNA polymerase. Facilitates transcription initiation by enhancing TATA-box recognition by TATA-box-binding protein (Tbp), and transcription factor B (Tfb) and RNA polymerase recruitment. Not absolutely required for transcription in vitro, but particularly important in cases where Tbp or Tfb function is not optimal. It dynamically alters the nucleic acid-binding properties of RNA polymerases by stabilizing the initiation complex and destabilizing elongation complexes. Seems to translocate with the RNA polymerase following initiation and acts by binding to the non template strand of the transcription bubble in elongation complexes. In Methanosphaera stadtmanae (strain ATCC 43021 / DSM 3091 / JCM 11832 / MCB-3), this protein is Transcription factor E.